Reading from the N-terminus, the 359-residue chain is S-geranylgeranyl-glutathione receptor P2RY8 (359 aa).

Topologically, residues Met-1–Asn-19 are extracellular. 2 N-linked (GlcNAc...) asparagine glycosylation sites follow: Asn-5 and Asn-11. A helical membrane pass occupies residues Pro-20 to Gly-40. The Cytoplasmic portion of the chain corresponds to Asn-41–Pro-57. Residues Ser-58 to Phe-78 form a helical membrane-spanning segment. Residues Gln-79–His-88 are Extracellular-facing. The chain crosses the membrane as a helical span at residues Trp-89–Ser-109. At Ser-110–Arg-138 the chain is on the cytoplasmic side. The helical transmembrane segment at Tyr-139–Ala-159 threads the bilayer. Topologically, residues Arg-160–Val-187 are extracellular. A helical membrane pass occupies residues Ala-188 to Ile-208. Residues Thr-209 to Gly-237 lie on the Cytoplasmic side of the membrane. A helical transmembrane segment spans residues Leu-238–Leu-258. Topologically, residues Ala-259 to Tyr-275 are extracellular. Residues Lys-276–Ala-296 traverse the membrane as a helical segment. The Cytoplasmic segment spans residues Ser-297–Phe-359. The tract at residues Arg-329–Phe-359 is disordered.

It belongs to the G-protein coupled receptor 1 family. Barely detectable in normal blood leukocytes. Weaker expression was seen in heart, kidney and lung. Not detected in brain. Expressed in B cells and follicular helper T cells in germinal centers (at protein level).

The protein resides in the cell membrane. Its function is as follows. G protein-coupled receptor for S-geranylgeranyl-glutathione (GGG), an endogenous metabolite present in lymphoid tissues. Couples the binding of GGG to the activation of GNA13 and downstream repression of AKT activation in lymphocytes defining their positioning and growth within lymphoid organs. In lymphoid follicles, confines B cells and follicular helper T cells in germinal centers (GCs) in response to GGG local gradients established by GGT5 (via GGG catabolism) and ABCC1 (via extracellular transport) with lower concentrations of GGG found in the follicular dendritic cell network region around which germinal centers are formed. In the bone marrow, also in response to GGG gradients established by GGT5 and ABCC1, it restricts chemotactic transmigration of B cells, T cells and NK cells from blood vessels to the bone marrow parenchyma. Contributes to GNA13-dependent pathway that suppresses GC B cell growth. In Homo sapiens (Human), this protein is S-geranylgeranyl-glutathione receptor P2RY8.